A 320-amino-acid polypeptide reads, in one-letter code: Cytochrome f (320 aa).

The first 35 residues, 1-35, serve as a signal peptide directing secretion; sequence MQTRKTLSWIKEEITRSISVSLMIYIITGAYISNA. Heme contacts are provided by Tyr36, Cys56, Cys59, and His60. Residues 286 to 306 traverse the membrane as a helical segment; the sequence is VQGLLFFLASVILAQIFLVLK.

The protein belongs to the cytochrome f family. In terms of assembly, the 4 large subunits of the cytochrome b6-f complex are cytochrome b6, subunit IV (17 kDa polypeptide, petD), cytochrome f and the Rieske protein, while the 4 small subunits are PetG, PetL, PetM and PetN. The complex functions as a dimer. Heme is required as a cofactor.

It localises to the plastid. The protein resides in the chloroplast thylakoid membrane. In terms of biological role, component of the cytochrome b6-f complex, which mediates electron transfer between photosystem II (PSII) and photosystem I (PSI), cyclic electron flow around PSI, and state transitions. The chain is Cytochrome f from Populus alba (White poplar).